The sequence spans 410 residues: F-box protein At5g36730 (410 aa).

Residues M1–L46 enclose the F-box domain.

In Arabidopsis thaliana (Mouse-ear cress), this protein is F-box protein At5g36730.